A 640-amino-acid chain; its full sequence is Chaperone protein HtpG (640 aa).

The segment at 1–348 is a; substrate-binding; the sequence is MAQYKFETEV…SEDLPLNVSR (348 aa). Positions 349-565 are b; the sequence is EILQQNRILS…ETDPSLQMER (217 aa). Residues 566–640 are c; it reads MMRAMGQFNT…RLNRLMTNLK (75 aa).

It belongs to the heat shock protein 90 family. In terms of assembly, homodimer.

Its subcellular location is the cytoplasm. Molecular chaperone. Has ATPase activity. The protein is Chaperone protein HtpG of Treponema denticola (strain ATCC 35405 / DSM 14222 / CIP 103919 / JCM 8153 / KCTC 15104).